Consider the following 51-residue polypeptide: Large ribosomal subunit protein eL39 (51 aa).

The protein belongs to the eukaryotic ribosomal protein eL39 family.

This Saccharolobus islandicus (strain L.S.2.15 / Lassen #1) (Sulfolobus islandicus) protein is Large ribosomal subunit protein eL39.